The following is a 206-amino-acid chain: Outer-membrane lipoprotein carrier protein (206 aa).

Positions 1 to 20 are cleaved as a signal peptide; sequence MFYLIKKLPKFILFSLYLYA.

It belongs to the LolA family. In terms of assembly, monomer.

It localises to the periplasm. Participates in the translocation of lipoproteins from the inner membrane to the outer membrane. Only forms a complex with a lipoprotein if the residue after the N-terminal Cys is not an aspartate (The Asp acts as a targeting signal to indicate that the lipoprotein should stay in the inner membrane). This Wigglesworthia glossinidia brevipalpis protein is Outer-membrane lipoprotein carrier protein.